The primary structure comprises 480 residues: Glycogen synthase (480 aa).

An ADP-alpha-D-glucose-binding site is contributed by Lys15.

Belongs to the glycosyltransferase 1 family. Bacterial/plant glycogen synthase subfamily.

The enzyme catalyses [(1-&gt;4)-alpha-D-glucosyl](n) + ADP-alpha-D-glucose = [(1-&gt;4)-alpha-D-glucosyl](n+1) + ADP + H(+). It functions in the pathway glycan biosynthesis; glycogen biosynthesis. Its function is as follows. Synthesizes alpha-1,4-glucan chains using ADP-glucose. The protein is Glycogen synthase of Rhizobium leguminosarum bv. trifolii (strain WSM2304).